The sequence spans 1404 residues: DNA-directed RNA polymerase subunit beta' (1404 aa).

Residues cysteine 60, cysteine 62, cysteine 75, and cysteine 78 each coordinate Zn(2+). 3 residues coordinate Mg(2+): aspartate 449, aspartate 451, and aspartate 453. Cysteine 778, cysteine 852, cysteine 859, and cysteine 862 together coordinate Zn(2+). The disordered stretch occupies residues 1381 to 1404 (DRPLEEEEEEEIPQSIADDSDGDE). The span at 1384 to 1404 (LEEEEEEEIPQSIADDSDGDE) shows a compositional bias: acidic residues.

It belongs to the RNA polymerase beta' chain family. As to quaternary structure, the RNAP catalytic core consists of 2 alpha, 1 beta, 1 beta' and 1 omega subunit. When a sigma factor is associated with the core the holoenzyme is formed, which can initiate transcription. It depends on Mg(2+) as a cofactor. Requires Zn(2+) as cofactor.

The catalysed reaction is RNA(n) + a ribonucleoside 5'-triphosphate = RNA(n+1) + diphosphate. DNA-dependent RNA polymerase catalyzes the transcription of DNA into RNA using the four ribonucleoside triphosphates as substrates. The sequence is that of DNA-directed RNA polymerase subunit beta' from Leptospira borgpetersenii serovar Hardjo-bovis (strain JB197).